The following is a 405-amino-acid chain: Nuclear hormone receptor family member nhr-199 (405 aa).

The segment at residues 20-111 (IPYCLICSEV…MGMQRSSVQQ (92 aa)) is a DNA-binding region (nuclear receptor). 2 NR C4-type zinc fingers span residues 23-44 (CLICSEVADGNHFGVAAACRAC) and 60-94 (CGRNGQCFFLSCKFLLVGFQISPLSSDARSMCKAC). Residues 126 to 376 (RGKPVLNKLR…PFSRIHGNQK (251 aa)) form the NR LBD domain.

Belongs to the nuclear hormone receptor family.

It is found in the nucleus. Its function is as follows. Orphan nuclear receptor. The chain is Nuclear hormone receptor family member nhr-199 (nhr-199) from Caenorhabditis elegans.